A 252-amino-acid polypeptide reads, in one-letter code: Putative endonuclease C1F12.06c (252 aa).

2 residues coordinate Mg(2+): Asp-43 and Asp-114.

This sequence belongs to the endonuclease V family.

It localises to the cytoplasm. It is found in the nucleus. This Schizosaccharomyces pombe (strain 972 / ATCC 24843) (Fission yeast) protein is Putative endonuclease C1F12.06c.